A 202-amino-acid chain; its full sequence is Small ribosomal subunit protein uS4c (202 aa).

One can recognise an S4 RNA-binding domain in the interval 90 to 153; the sequence is MRLDNVIFRL…KSETIISKNI (64 aa).

This sequence belongs to the universal ribosomal protein uS4 family. As to quaternary structure, part of the 30S ribosomal subunit. Contacts protein S5. The interaction surface between S4 and S5 is involved in control of translational fidelity.

Its subcellular location is the plastid. The protein localises to the chloroplast. One of the primary rRNA binding proteins, it binds directly to 16S rRNA where it nucleates assembly of the body of the 30S subunit. Functionally, with S5 and S12 plays an important role in translational accuracy. The sequence is that of Small ribosomal subunit protein uS4c (rps4) from Sphaerocarpos donnelli (Liverwort).